A 445-amino-acid chain; its full sequence is UPF0210 protein LACR_1020 (445 aa).

The protein belongs to the UPF0210 family. As to quaternary structure, homodimer.

The polypeptide is UPF0210 protein LACR_1020 (Lactococcus lactis subsp. cremoris (strain SK11)).